Reading from the N-terminus, the 203-residue chain is Ribonuclease HII (203 aa).

Residues 18–203 (GHYAGVDEVG…SFRPVREALA (186 aa)) enclose the RNase H type-2 domain. Residues Asp24, Glu25, and Asp116 each contribute to the a divalent metal cation site.

It belongs to the RNase HII family. It depends on Mn(2+) as a cofactor. Mg(2+) serves as cofactor.

It is found in the cytoplasm. The enzyme catalyses Endonucleolytic cleavage to 5'-phosphomonoester.. In terms of biological role, endonuclease that specifically degrades the RNA of RNA-DNA hybrids. This chain is Ribonuclease HII, found in Shewanella halifaxensis (strain HAW-EB4).